The following is a 288-amino-acid chain: 33 kDa chaperonin (288 aa).

Cystine bridges form between Cys235/Cys237 and Cys268/Cys271.

The protein belongs to the HSP33 family. Post-translationally, under oxidizing conditions two disulfide bonds are formed involving the reactive cysteines. Under reducing conditions zinc is bound to the reactive cysteines and the protein is inactive.

The protein resides in the cytoplasm. In terms of biological role, redox regulated molecular chaperone. Protects both thermally unfolding and oxidatively damaged proteins from irreversible aggregation. Plays an important role in the bacterial defense system toward oxidative stress. The sequence is that of 33 kDa chaperonin from Streptococcus suis (strain 98HAH33).